The chain runs to 179 residues: Acireductone dioxygenase (179 aa).

Positions 99, 101, 105, and 143 each coordinate Fe(2+). Positions 99, 101, 105, and 143 each coordinate Ni(2+).

This sequence belongs to the acireductone dioxygenase (ARD) family. As to quaternary structure, monomer. It depends on Fe(2+) as a cofactor. Requires Ni(2+) as cofactor.

The enzyme catalyses 1,2-dihydroxy-5-(methylsulfanyl)pent-1-en-3-one + O2 = 3-(methylsulfanyl)propanoate + CO + formate + 2 H(+). It catalyses the reaction 1,2-dihydroxy-5-(methylsulfanyl)pent-1-en-3-one + O2 = 4-methylsulfanyl-2-oxobutanoate + formate + 2 H(+). The protein operates within amino-acid biosynthesis; L-methionine biosynthesis via salvage pathway; L-methionine from S-methyl-5-thio-alpha-D-ribose 1-phosphate: step 5/6. Its function is as follows. Catalyzes 2 different reactions between oxygen and the acireductone 1,2-dihydroxy-3-keto-5-methylthiopentene (DHK-MTPene) depending upon the metal bound in the active site. Fe-containing acireductone dioxygenase (Fe-ARD) produces formate and 2-keto-4-methylthiobutyrate (KMTB), the alpha-ketoacid precursor of methionine in the methionine recycle pathway. Ni-containing acireductone dioxygenase (Ni-ARD) produces methylthiopropionate, carbon monoxide and formate, and does not lie on the methionine recycle pathway. In Sulfurihydrogenibium sp. (strain YO3AOP1), this protein is Acireductone dioxygenase.